Consider the following 449-residue polypeptide: uncharacterized protein (449 aa).

13 helical membrane-spanning segments follow: residues 1-21 (MVANLPALFSLGVFVGVILLI), 26-46 (IHLTIAAFLGALILVFTHVIT), 51-71 (IDYISQSYATLALFFGVMVLV), 97-117 (LLMLGVIAITTPICAVLPNAT), 137-157 (FVPILILMVFVANSAGLLTLV), 178-198 (FKLSFMGVLAIVSIVVITPFL), 223-243 (VLMAGGVIITLVLIFFVIGES), 244-264 (LPVPIPPASVALMGACLALLL), 285-305 (LIFFMSIFVIIGSLEKTGVTA), 310-330 (LLAVVVGQNIAFGAIVLVFTV), 340-360 (IPLVVAMVPLLKQYVVNIGFA), 377-397 (VLPLFYAMMFGATLGGNGTLV), and 425-445 (GLPVMAVQLVVAALFVAWLMF).

It belongs to the CitM (TC 2.A.11) transporter family.

The protein localises to the cell membrane. This is an uncharacterized protein from Synechocystis sp. (strain ATCC 27184 / PCC 6803 / Kazusa).